The sequence spans 386 residues: Probable mannan endo-1,4-beta-mannosidase A (386 aa).

The first 21 residues, 1–21, serve as a signal peptide directing secretion; it reads MKLNPSLLTAAGLVSAQLASA. Tryptophan 95 and asparagine 207 together coordinate substrate. Glutamate 208 (proton donor) is an active-site residue. Substrate is bound at residue tyrosine 283. Glutamate 316 acts as the Nucleophile in catalysis. An N-linked (GlcNAc...) asparagine glycan is attached at asparagine 336. A substrate-binding site is contributed by tryptophan 346.

This sequence belongs to the glycosyl hydrolase 5 (cellulase A) family.

The protein resides in the secreted. The catalysed reaction is Random hydrolysis of (1-&gt;4)-beta-D-mannosidic linkages in mannans, galactomannans and glucomannans.. Functionally, endo-1,4-mannanase, a crucial enzyme for depolymerization of seed galactomannans and wood galactoglucomannans. In Aspergillus oryzae (strain ATCC 42149 / RIB 40) (Yellow koji mold), this protein is Probable mannan endo-1,4-beta-mannosidase A (manA).